Here is a 359-residue protein sequence, read N- to C-terminus: Peptide chain release factor 1 (359 aa).

N5-methylglutamine is present on Gln234. The tract at residues 283–305 (SQKDAARAADRRAQVGSGDRSER) is disordered.

Belongs to the prokaryotic/mitochondrial release factor family. Post-translationally, methylated by PrmC. Methylation increases the termination efficiency of RF1.

It is found in the cytoplasm. Functionally, peptide chain release factor 1 directs the termination of translation in response to the peptide chain termination codons UAG and UAA. This Methylobacterium nodulans (strain LMG 21967 / CNCM I-2342 / ORS 2060) protein is Peptide chain release factor 1.